The sequence spans 633 residues: MKLDWERTGRRMGFIDLSKYEVWSYDTECTGLQYKVDKVFGFSIATPDGQSGYFDVREQPESLQWLAEQVEPYKGTIVCHNASFDYRMSLHSGIKLPLSQIDDTGIRACCINEHESTIFPWTRGRAGDYSLDYLAKKYVGAQKYAEIYDELAALFGGKATRKTQMPNLYRAPSGLVRKYACPDAELTLELWLEQEELIKKRGLERIVAFERKVMPTLIRTEARGVRVDLDYAEQAIFKMDGVVRENQAKMFALAGREFNPNSPKQVREVFGAKEEGGVWKSRDGTILERTATGNPCLDADALRSMTDPLAAAVLELRSNIKTKDTFLAKHVVEHSVGGRVYPNINQMKGEDGGTGTGRLSYTGPALQQIPSRNKRIAAIIKPAFLPEEGQLWLDSDMASFEVRIFAHLVAAYNPAIAKAYAENPELDLHQWVGDLMGIPRNASYSGQPNAKQMNLGMIFNRGDGAVADSLGMPWEWCEFTDKKGELIRYKKAGREAKSIIAAYHSQIQGVKTLATRAQKIAEERGWIQTAHGRRLRFPNGYKSYKASGILIQATAADENKENWLRIEDALGSDGSMILNTHDSYSMSVDENWKPIWERVKKAVERQTLRVPLLLEFDGVGKNWAEAKGLIDVH.

The protein belongs to the DNA polymerase type-A family. DpoZ subfamily.

It catalyses the reaction DNA(n) + a 2'-deoxyribonucleoside 5'-triphosphate = DNA(n+1) + diphosphate. The enzyme catalyses dZTP + DNA(n) = DNA(n)-Z + diphosphate. In terms of biological role, DNA polymerase that preferentially incorporates the non-canonical base aminoadenine/dZTP instead of adenine into the synthesized DNA. More efficient in using dZTP instead of dATP as a substrate. In addition to this preference for dZTP, the phage also encodes a dATP triphosphohydrolase that removes dATP and its precursor dADP from the nucleotide pool of the host. This Vibrio phage phiVC8 protein is DNA polymerase DpoZ (dpoZ).